The primary structure comprises 494 residues: Ceramide glucosyltransferase (494 aa).

The Lumenal portion of the chain corresponds to 1–6; it reads MPLLMD. The helical transmembrane segment at 7–27 threads the bilayer; sequence GLAYAGAIWSLIVFCVQAIGL. Residues 28–337 are Cytoplasmic-facing; that stretch reads YQLFRSYSRP…VRWLRVRKWT (310 aa). Aspartate 95 is a short sequence motif (D1). A short sequence motif (D2) is located at residue aspartate 160. Position 285 (aspartate 285) is a short sequence motif, D3. Catalysis depends on aspartate 285, which acts as the Proton acceptor. Residues 326–330 carry the (Q/R)XXRW motif; it reads RRVRW. The chain crosses the membrane as a helical span at residues 338–358; sequence VLLATLVEPGVESMVCCMAFA. The Lumenal portion of the chain corresponds to 359–380; sequence HALTTTPWCPNPADWPIPHTWT. A helical transmembrane segment spans residues 381–401; the sequence is ALWSIWLAAIAVWATLDYVVY. The Cytoplasmic segment spans residues 402–428; the sequence is HFLHSCRSIEKDADSPDFAQGNELMKR. A helical membrane pass occupies residues 429 to 449; sequence PFGAWILAWIGREILALPIWT. Residues 450-494 lie on the Lumenal side of the membrane; sequence RAVLLGTTVTWRGTKFKVRPDQSVVDIPNAGAKSNGIGSTNRKVR.

It belongs to the glycosyltransferase 2 family.

The protein resides in the golgi apparatus membrane. The enzyme catalyses an N-acylsphing-4-enine + UDP-alpha-D-glucose = a beta-D-glucosyl-(1&lt;-&gt;1')-N-acylsphing-4-enine + UDP + H(+). Its pathway is lipid metabolism; sphingolipid metabolism. Catalyzes the final step in the biosynthesis of the membrane lipid glucosylceramide (GluCer), the transfer of glucose to ceramide. Glucosylceramides play important roles in growth, differentiation and pathogenicity. In Pyricularia oryzae (strain 70-15 / ATCC MYA-4617 / FGSC 8958) (Rice blast fungus), this protein is Ceramide glucosyltransferase.